The following is a 544-amino-acid chain: Lysophosphatidylcholine acyltransferase 2 (544 aa).

At 1–57 (MSRCAQAAEVAATVPGAGVGNVGLRPPMVPRQASFFPPPVPNPFVQQTQIGSARRVQ) the chain is on the cytoplasmic side. Residues 58 to 78 (IVLLGIILLPIRVLLVALILL) traverse the membrane as a helical; Signal-anchor for type II membrane protein segment. The Lumenal segment spans residues 79–544 (LAWPFAAIST…EESTSDKKDD (466 aa)). The HXXXXD motif signature appears at 146–151 (HSTFFD). The EGTC motif signature appears at 220 to 223 (EGTC). 2 consecutive EF-hand domains span residues 391–426 (PVSD…LCNP) and 428–463 (NTEE…SLGV). 10 residues coordinate Ca(2+): Asp404, Asn406, Asp408, Ser410, Glu415, Asp441, Asp443, Asp445, Tyr447, and Glu452. Residues 518-529 (VQTTPSTASNKV) are compositionally biased toward polar residues. A disordered region spans residues 518–544 (VQTTPSTASNKVSPEKHEESTSDKKDD). The segment covering 530–544 (SPEKHEESTSDKKDD) has biased composition (basic and acidic residues).

It belongs to the 1-acyl-sn-glycerol-3-phosphate acyltransferase family.

The protein resides in the endoplasmic reticulum membrane. Its subcellular location is the golgi apparatus membrane. It is found in the cell membrane. The protein localises to the lipid droplet. It carries out the reaction a 1-acyl-sn-glycero-3-phosphocholine + an acyl-CoA = a 1,2-diacyl-sn-glycero-3-phosphocholine + CoA. It catalyses the reaction a 1-O-alkyl-sn-glycero-3-phosphocholine + acetyl-CoA = a 1-O-alkyl-2-acetyl-sn-glycero-3-phosphocholine + CoA. The catalysed reaction is a 1-acyl-sn-glycero-3-phosphate + an acyl-CoA = a 1,2-diacyl-sn-glycero-3-phosphate + CoA. The enzyme catalyses a 1-O-(1Z-alkenyl)-sn-glycero-3-phosphocholine + an acyl-CoA = a 1-O-(1Z-alkenyl)-2-acyl-sn-glycero-3-phosphocholine + CoA. It carries out the reaction 1-hexadecanoyl-sn-glycero-3-phosphate + (9Z)-octadecenoyl-CoA = 1-hexadecanoyl-2-(9Z-octadecenoyl)-sn-glycero-3-phosphate + CoA. It catalyses the reaction 1-(9Z-octadecenoyl)-sn-glycero-3-phosphate + (9Z)-octadecenoyl-CoA = 1,2-di-(9Z-octadecenoyl)-sn-glycero-3-phosphate + CoA. The catalysed reaction is 1-(9Z-octadecenoyl)-sn-glycero-3-phosphate + hexadecanoyl-CoA = 1-(9Z)-octadecenoyl-2-hexadecanoyl-sn-glycero-3-phosphate + CoA. The enzyme catalyses 1-heptadecanoyl-sn-glycero-3-phosphate + (9Z)-octadecenoyl-CoA = 1-heptadecanoyl-2-(9Z)-octadecenoyl-sn-glycero-3-phosphate + CoA. It carries out the reaction 1-octadecanoyl-sn-glycero-3-phosphate + (9Z)-octadecenoyl-CoA = 1-octadecanoyl-2-(9Z-octadecenoyl)-sn-glycero-3-phosphate + CoA. It catalyses the reaction heptadecanoyl-CoA + 1-(9Z-octadecenoyl)-sn-glycero-3-phosphate = 1-(9Z)-octadecenoyl-2-heptadecanoyl-sn-glycero-3-phosphate + CoA. The catalysed reaction is 1-(9Z-octadecenoyl)-sn-glycero-3-phosphate + (9Z,12Z)-octadecadienoyl-CoA = 1-(9Z)-octadecenoyl-2-(9Z,12Z)-octadecadienoyl-sn-glycero-3-phosphate + CoA. The enzyme catalyses 1-(9Z-octadecenoyl)-sn-glycero-3-phosphate + tetradecanoyl-CoA = 1-(9Z)-octadecenoyl-2-tetradecanoyl-sn-glycero-3-phosphate + CoA. It carries out the reaction pentadecanoyl-CoA + 1-(9Z-octadecenoyl)-sn-glycero-3-phosphate = 1-(9Z)-octadecenoyl-2-pentadecanoyl-sn-glycero-3-phosphate + CoA. It catalyses the reaction nonadecanoyl-CoA + 1-(9Z-octadecenoyl)-sn-glycero-3-phosphate = 1-(9Z)-octadecenoyl-2-nonadecanoyl-sn-glycero-3-phosphate + CoA. The catalysed reaction is 1-hexadecanoyl-sn-glycero-3-phosphocholine + (9Z)-octadecenoyl-CoA = 1-hexadecanoyl-2-(9Z-octadecenoyl)-sn-glycero-3-phosphocholine + CoA. The enzyme catalyses 1-O-hexadecyl-sn-glycero-3-phosphocholine + acetyl-CoA = 1-O-hexadecyl-2-acetyl-sn-glycero-3-phosphocholine + CoA. It carries out the reaction 1-O-octadecyl-sn-glycero-3-phosphocholine + acetyl-CoA = 1-O-octadecyl-2-acetyl-sn-glycero-3-phosphocholine + CoA. It catalyses the reaction 1-hexadecanoyl-sn-glycero-3-phosphocholine + acetyl-CoA = 1-hexadecanoyl-2-acetyl-sn-glycero-3-phosphocholine + CoA. The catalysed reaction is 1-octadecanoyl-sn-glycero-3-phosphocholine + acetyl-CoA = 1-octadecanoyl-2-acetyl-sn-glycero-3-phosphocholine + CoA. The enzyme catalyses a 1-O-(1Z-alkenyl)-sn-glycero-3-phosphocholine + acetyl-CoA = 1-O-(1Z)-alkenyl-2-acetyl-sn-glycero-3-phosphocholine + CoA. It carries out the reaction 1-O-octadecyl-sn-glycero-3-phosphocholine + (5Z,8Z,11Z,14Z)-eicosatetraenoyl-CoA = 1-O-octadecyl-2-(5Z,8Z,11Z,14Z)-eicosatetraenoyl-sn-glycero-3-phosphocholine + CoA. The protein operates within lipid metabolism; phospholipid metabolism. Its function is as follows. Exhibits both acyltransferase and acetyltransferase activities. Catalyzes the conversion of lysophosphatidylcholine (1-acyl-sn-glycero-3-phosphocholine or LPC) into phosphatidylcholine (1,2-diacyl-sn-glycero-3-phosphocholine or PC). Catalyzes the conversion 1-acyl-sn-glycerol-3-phosphate (lysophosphatidic acid or LPA) into 1,2-diacyl-sn-glycerol-3-phosphate (phosphatidic acid or PA) by incorporating an acyl moiety at the sn-2 position of the glycerol backbone. Involved in platelet-activating factor (PAF) biosynthesis by catalyzing the conversion of the PAF precursor, 1-O-alkyl-sn-glycero-3-phosphocholine (lyso-PAF) into 1-O-alkyl-2-acetyl-sn-glycero-3-phosphocholine (PAF). Also converts lyso-PAF to 1-O-alkyl-2-acyl-sn-glycero-3-phosphocholine (PC), a major component of cell membranes and a PAF precursor. Under resting conditions, acyltransferase activity is preferred. Upon acute inflammatory stimulus, acetyltransferase activity is enhanced and PAF synthesis increases. Involved in the regulation of lipid droplet number and size. This Homo sapiens (Human) protein is Lysophosphatidylcholine acyltransferase 2 (LPCAT2).